A 91-amino-acid chain; its full sequence is Teretoxin Tan6.2 (91 aa).

Residues 1 to 21 (MATSGRLLCVCLVLGLVFGSL) form the signal peptide. Residues 22 to 50 (GYPVMEKKRAGKNFDLGTIANWAWQIGEK) constitute a propeptide that is removed on maturation.

It belongs to the teretoxin M (TM) superfamily. Contains 3 disulfide bonds. Expressed by the venom duct.

The protein localises to the secreted. The protein is Teretoxin Tan6.2 of Terebra anilis (Auger snail).